Here is a 290-residue protein sequence, read N- to C-terminus: MFTLPPVLNSSYVGIHGNSTFINFEFSFYTLPMLFLLVPILYIPITIIIILRILVKLYYAFRDRNNNVYLLSAISISQCMCLLFFLADFLYLRLPTSGLLTSWCASIEPNRFITILTIFTYHINYSTMIFPFLVSIMRLILIISPKNHKKFNGQLLRFSIPFICVYPIIFTFFMFPAIGYCSYAAYPFPFGAIIFRIERTFFGLVNNFSLLFNTLFWMTCCIITNFILLLLLIKSRCLLNAQTRSMHSYKVEVSLSLTTFSMIFSYLSNAMIVFLLLELHIVGHYASPIW.

Helical transmembrane passes span 31-51 (LPML…IIIL), 70-90 (LLSA…ADFL), 112-134 (FITI…PFLV), 158-178 (FSIP…FPAI), 185-205 (AYPF…FGLV), 213-233 (NTLF…LLLI), and 262-282 (MIFS…LHIV).

The protein belongs to the nematode receptor-like protein sru family.

It localises to the membrane. The sequence is that of Serpentine receptor class U-26 (sru-26) from Caenorhabditis elegans.